Reading from the N-terminus, the 341-residue chain is LIM and senescent cell antigen-like-containing domain protein 2 (341 aa).

LIM zinc-binding domains follow at residues 13 to 74 (AVCQ…LFAP), 76 to 133 (CGSC…EKAK), 138 to 195 (YICQ…KMGV), 196 to 255 (PICG…LFGD), and 256 to 315 (VCYN…FPLE). F22 bears the Phosphoserine mark. Position 327 is a phosphothreonine (T327). A Phosphoserine modification is found at S328.

Interacts with TGFB1I1. Interacts with integrin-linked protein kinase 1 (ILK) via the first LIM domain, and in competition with LIMS1. Part of the heterotrimeric IPP complex composed of integrin-linked kinase (ILK), LIMS1 or LIMS2, and PARVA.

Its subcellular location is the nucleus. The protein localises to the cell junction. The protein resides in the focal adhesion. It localises to the cell membrane. Adapter protein in a cytoplasmic complex linking beta-integrins to the actin cytoskeleton, bridges the complex to cell surface receptor tyrosine kinases and growth factor receptors. Plays a role in modulating cell spreading and migration. The chain is LIM and senescent cell antigen-like-containing domain protein 2 (LIMS2) from Homo sapiens (Human).